The primary structure comprises 434 residues: Beta-enolase (434 aa).

Alanine 2 carries the N-acetylalanine modification. Phosphothreonine is present on threonine 72. Serine 83 and serine 157 each carry phosphoserine. Residues histidine 158 and glutamate 167 each coordinate substrate. Serine 176 is subject to Phosphoserine. Threonine 205 carries the phosphothreonine modification. Glutamate 210 functions as the Proton donor in the catalytic mechanism. At threonine 229 the chain carries Phosphothreonine. Tyrosine 236 carries the post-translational modification Phosphotyrosine. Aspartate 245 lines the Mg(2+) pocket. Serine 263 carries the post-translational modification Phosphoserine. The substrate site is built by glutamate 293 and aspartate 318. Residues glutamate 293 and aspartate 318 each contribute to the Mg(2+) site. The active-site Proton acceptor is lysine 343. Residues 370–373 (SHRS) and lysine 394 each bind substrate.

The protein belongs to the enolase family. Mammalian enolase is composed of 3 isozyme subunits, alpha, beta and gamma, which can form homodimers or heterodimers which are cell-type and development-specific. Interacts with PNKD. It depends on Mg(2+) as a cofactor.

The protein localises to the cytoplasm. It catalyses the reaction (2R)-2-phosphoglycerate = phosphoenolpyruvate + H2O. Its pathway is carbohydrate degradation; glycolysis; pyruvate from D-glyceraldehyde 3-phosphate: step 4/5. Functionally, glycolytic enzyme that catalyzes the conversion of 2-phosphoglycerate to phosphoenolpyruvate. Appears to have a function in striated muscle development and regeneration. The sequence is that of Beta-enolase (ENO3) from Bos taurus (Bovine).